The primary structure comprises 217 residues: Zinc finger CCHC-type and RNA-binding motif-containing protein 1 (217 aa).

Positions 10–88 (STVYVSNLPF…RVIKASIAID (79 aa)) constitute an RRM domain. Residues 105-122 (SKCYECGESGHLSYACPK) form a CCHC-type zinc finger. Residues 120 to 217 (CPKNMLGERE…YFSDEEELSD (98 aa)) are disordered. Residues 145–163 (PEEEIEEVEESEDEGEDPA) show a composition bias toward acidic residues. Residues serine 155, serine 210, and serine 216 each carry the phosphoserine modification.

As to quaternary structure, component of the U11/U12 snRNPs that are part of the U12-type spliceosome. Interacts with ZRSR1.

The protein localises to the nucleus. It localises to the nucleoplasm. This Bos taurus (Bovine) protein is Zinc finger CCHC-type and RNA-binding motif-containing protein 1 (ZCRB1).